A 238-amino-acid chain; its full sequence is Putative ABC transporter ATP-binding protein AF_1841 (238 aa).

The region spanning 8–238 is the ABC transporter domain; the sequence is IEADSVSYDY…EELLEKAGVI (231 aa). 41–48 contacts ATP; it reads GANGSGKS.

It belongs to the ABC transporter superfamily.

It localises to the cell membrane. Probably part of an ABC transporter complex. Responsible for energy coupling to the transport system. This chain is Putative ABC transporter ATP-binding protein AF_1841, found in Archaeoglobus fulgidus (strain ATCC 49558 / DSM 4304 / JCM 9628 / NBRC 100126 / VC-16).